The following is a 299-amino-acid chain: NAD kinase 1 (299 aa).

The active-site Proton acceptor is the Asp-62. NAD(+) contacts are provided by residues 62–63, Lys-67, 143–144, Lys-173, and Asp-175; these read DG and ND.

Belongs to the NAD kinase family. The cofactor is a divalent metal cation.

Its subcellular location is the cytoplasm. The catalysed reaction is NAD(+) + ATP = ADP + NADP(+) + H(+). Functionally, involved in the regulation of the intracellular balance of NAD and NADP, and is a key enzyme in the biosynthesis of NADP. Catalyzes specifically the phosphorylation on 2'-hydroxyl of the adenosine moiety of NAD to yield NADP. The sequence is that of NAD kinase 1 from Prochlorococcus marinus subsp. pastoris (strain CCMP1986 / NIES-2087 / MED4).